The following is a 156-amino-acid chain: Cyclic pyranopterin monophosphate synthase (156 aa).

Residues 73 to 75 (LCH) and 110 to 111 (ME) contribute to the substrate site. Asp-125 is an active-site residue.

Belongs to the MoaC family. Homohexamer; trimer of dimers.

It catalyses the reaction (8S)-3',8-cyclo-7,8-dihydroguanosine 5'-triphosphate = cyclic pyranopterin phosphate + diphosphate. It functions in the pathway cofactor biosynthesis; molybdopterin biosynthesis. Catalyzes the conversion of (8S)-3',8-cyclo-7,8-dihydroguanosine 5'-triphosphate to cyclic pyranopterin monophosphate (cPMP). This is Cyclic pyranopterin monophosphate synthase from Stutzerimonas stutzeri (strain A1501) (Pseudomonas stutzeri).